Consider the following 262-residue polypeptide: Tetratricopeptide repeat protein 33 (262 aa).

Residues 17–63 (ATSQQFEAEAADEKDAAENEDGNWLQASKRRKETLQEGCKQRSQQLK) form a disordered region. TPR repeat units lie at residues 59–92 (SQQL…TPGD), 93–126 (ATLY…NPHS), and 127–160 (WEAW…YPMN). Ser-197 carries the phosphoserine modification.

This chain is Tetratricopeptide repeat protein 33 (Ttc33), found in Mus musculus (Mouse).